The chain runs to 202 residues: Small ribosomal subunit protein uS4c (202 aa).

Residues 90 to 153 (MRLDNVIFRL…KSEAIISKNI (64 aa)) form the S4 RNA-binding domain.

Belongs to the universal ribosomal protein uS4 family. Part of the 30S ribosomal subunit. Contacts protein S5. The interaction surface between S4 and S5 is involved in control of translational fidelity.

It localises to the plastid. Its subcellular location is the chloroplast. In terms of biological role, one of the primary rRNA binding proteins, it binds directly to 16S rRNA where it nucleates assembly of the body of the 30S subunit. With S5 and S12 plays an important role in translational accuracy. The polypeptide is Small ribosomal subunit protein uS4c (rps4) (Hypopterygium didictyon).